The primary structure comprises 274 residues: Nitrogenase iron protein (274 aa).

8–15 (GKGGIGKS) is a binding site for ATP. Position 94 (Cys-94) interacts with [4Fe-4S] cluster. An ADP-ribosylarginine; by dinitrogenase reductase ADP-ribosyltransferase modification is found at Arg-97. Cys-131 provides a ligand contact to [4Fe-4S] cluster.

The protein belongs to the NifH/BchL/ChlL family. As to quaternary structure, homodimer. It depends on [4Fe-4S] cluster as a cofactor. In terms of processing, the reversible ADP-ribosylation of Arg-97 inactivates the nitrogenase reductase and regulates nitrogenase activity.

The catalysed reaction is N2 + 8 reduced [2Fe-2S]-[ferredoxin] + 16 ATP + 16 H2O = H2 + 8 oxidized [2Fe-2S]-[ferredoxin] + 2 NH4(+) + 16 ADP + 16 phosphate + 6 H(+). Functionally, the key enzymatic reactions in nitrogen fixation are catalyzed by the nitrogenase complex, which has 2 components: the iron protein and the molybdenum-iron protein. This Prosthecochloris aestuarii (strain DSM 271 / SK 413) protein is Nitrogenase iron protein.